The primary structure comprises 344 residues: HTH-type transcriptional repressor MelR (344 aa).

Positions 2-58 (VRIKDIALKAKVSSATVSRILNEDESLSVAGETRQRVINIAEELGYQTVAKRRKSRG) constitute an HTH lacI-type domain. The segment at residues 4 to 23 (IKDIALKAKVSSATVSRILN) is a DNA-binding region (H-T-H motif).

The protein localises to the cytoplasm. Its function is as follows. Represses the melibiose operon melREDCA in the absence of melibiose or raffinose. Binds to two binding sites at the promoter region of the operon. This chain is HTH-type transcriptional repressor MelR, found in Bacillus subtilis (strain 168).